The following is a 485-amino-acid chain: UDP-N-acetylmuramate--L-alanine ligase (485 aa).

125–131 (GTHGKTT) is an ATP binding site.

It belongs to the MurCDEF family.

It localises to the cytoplasm. It carries out the reaction UDP-N-acetyl-alpha-D-muramate + L-alanine + ATP = UDP-N-acetyl-alpha-D-muramoyl-L-alanine + ADP + phosphate + H(+). Its pathway is cell wall biogenesis; peptidoglycan biosynthesis. Its function is as follows. Cell wall formation. The protein is UDP-N-acetylmuramate--L-alanine ligase of Stutzerimonas stutzeri (strain A1501) (Pseudomonas stutzeri).